A 205-amino-acid chain; its full sequence is High frequency lysogenization protein HflD homolog (205 aa).

This sequence belongs to the HflD family.

It is found in the cytoplasm. Its subcellular location is the cell inner membrane. The protein is High frequency lysogenization protein HflD homolog of Photobacterium profundum (strain SS9).